The chain runs to 273 residues: 2,3,4,5-tetrahydropyridine-2,6-dicarboxylate N-succinyltransferase (273 aa).

Substrate-binding residues include Arg104 and Asp141.

This sequence belongs to the transferase hexapeptide repeat family. In terms of assembly, homotrimer.

The protein localises to the cytoplasm. It catalyses the reaction (S)-2,3,4,5-tetrahydrodipicolinate + succinyl-CoA + H2O = (S)-2-succinylamino-6-oxoheptanedioate + CoA. It functions in the pathway amino-acid biosynthesis; L-lysine biosynthesis via DAP pathway; LL-2,6-diaminopimelate from (S)-tetrahydrodipicolinate (succinylase route): step 1/3. The chain is 2,3,4,5-tetrahydropyridine-2,6-dicarboxylate N-succinyltransferase from Nitrosospira multiformis (strain ATCC 25196 / NCIMB 11849 / C 71).